A 160-amino-acid polypeptide reads, in one-letter code: ATP synthase subunit b, chloroplastic (160 aa).

The chain crosses the membrane as a helical span at residues 12 to 31 (NVINIAILVVILIRFARQVV).

It belongs to the ATPase B chain family. In terms of assembly, F-type ATPases have 2 components, F(1) - the catalytic core - and F(0) - the membrane proton channel. F(1) has five subunits: alpha(3), beta(3), gamma(1), delta(1), epsilon(1). F(0) has four main subunits: a(1), b(1), b'(1) and c(10-14). The alpha and beta chains form an alternating ring which encloses part of the gamma chain. F(1) is attached to F(0) by a central stalk formed by the gamma and epsilon chains, while a peripheral stalk is formed by the delta, b and b' chains.

The protein localises to the plastid. It localises to the chloroplast thylakoid membrane. Its function is as follows. F(1)F(0) ATP synthase produces ATP from ADP in the presence of a proton or sodium gradient. F-type ATPases consist of two structural domains, F(1) containing the extramembraneous catalytic core and F(0) containing the membrane proton channel, linked together by a central stalk and a peripheral stalk. During catalysis, ATP synthesis in the catalytic domain of F(1) is coupled via a rotary mechanism of the central stalk subunits to proton translocation. Component of the F(0) channel, it forms part of the peripheral stalk, linking F(1) to F(0). The protein is ATP synthase subunit b, chloroplastic of Cyanidioschyzon merolae (strain NIES-3377 / 10D) (Unicellular red alga).